A 79-amino-acid chain; its full sequence is MKTLLLTLVVMTIMCLDLGYTLTCYMNPSGTMVCKEHETMCYQLIVWTFQYRVLYLKGCTSSCPEGNNRACCSTGLCNN.

A signal peptide spans 1–21 (MKTLLLTLVVMTIMCLDLGYT). 4 cysteine pairs are disulfide-bonded: cysteine 24–cysteine 41, cysteine 34–cysteine 59, cysteine 63–cysteine 71, and cysteine 72–cysteine 77.

The protein belongs to the three-finger toxin family. Short-chain subfamily. Expressed by the venom gland.

It localises to the secreted. In Oxyuranus scutellatus scutellatus (Australian taipan), this protein is Scutelatoxin.